We begin with the raw amino-acid sequence, 103 residues long: Nematocin (103 aa).

The first 19 residues, 1–19 (MGSSPILLVLAISIGLASA), serve as a signal peptide directing secretion. Cys20 and Cys25 form a disulfide bridge. At Tyr30 the chain carries Tyrosine amide. The propeptide occupies 31–103 (GRTIRCSSCG…QGGCQTSAMC (73 aa)).

The protein belongs to the vasopressin/oxytocin family. As to expression, detected in thermosensory AFD neurons, neurosecretory NSM cells, AVK interneurons, pharyngeal neuron M5, and the mechanosensory DVA neuron. Detected in male-specific CP motor neurons.

The protein localises to the secreted. Its function is as follows. Ligand for the G-protein coupled receptor ntr-1. Plays a role in gustatory associative learning. Also plays a role in male mating behavior. The polypeptide is Nematocin (Caenorhabditis elegans).